A 281-amino-acid polypeptide reads, in one-letter code: Protein ZAR1-like 1.S (281 aa).

The 3CxxC-type zinc finger occupies 183–267; it reads QKYGFFQCKD…QDLCGRCKGQ (85 aa).

This sequence belongs to the ZAR1 family. Component of a cytoplasmic ribonucleoprotein complex together with eif4enif1/4E-T and cpeb1. In terms of tissue distribution, expressed in oocytes.

The protein resides in the cytoplasm. It is found in the cytoplasmic ribonucleoprotein granule. MRNA-binding protein required for maternal mRNA storage, translation and degradation during oocyte maturation. Controls timing of meiosis during oogenesis. Probably promotes formation of some phase-separated membraneless compartment that stores maternal mRNAs in oocytes: acts by undergoing liquid-liquid phase separation upon binding to maternal mRNAs. Binds to the 3'-UTR of maternal mRNAs, inhibiting their translation. This Xenopus laevis (African clawed frog) protein is Protein ZAR1-like 1.S.